The following is a 216-amino-acid chain: Large ribosomal subunit protein bL25 (216 aa).

The disordered stretch occupies residues 184 to 216; sequence VPPTSDVEEEEGDEDLEEDVEETAAEEEEGVEE. Acidic residues predominate over residues 189–216; it reads DVEEEEGDEDLEEDVEETAAEEEEGVEE.

Belongs to the bacterial ribosomal protein bL25 family. CTC subfamily. In terms of assembly, part of the 50S ribosomal subunit; part of the 5S rRNA/L5/L18/L25 subcomplex. Contacts the 5S rRNA. Binds to the 5S rRNA independently of L5 and L18.

This is one of the proteins that binds to the 5S RNA in the ribosome where it forms part of the central protuberance. This Desulforapulum autotrophicum (strain ATCC 43914 / DSM 3382 / VKM B-1955 / HRM2) (Desulfobacterium autotrophicum) protein is Large ribosomal subunit protein bL25.